The chain runs to 461 residues: Bifunctional protein GlmU (461 aa).

The tract at residues 1-235 is pyrophosphorylase; that stretch reads MKAIILAAGL…ITEIFGVNDR (235 aa). UDP-N-acetyl-alpha-D-glucosamine-binding positions include 6-9, K20, Q71, and 77-78; these read LAAG and GT. Mg(2+) is bound at residue D102. Residues G145, E160, N175, and N233 each coordinate UDP-N-acetyl-alpha-D-glucosamine. Residue N233 participates in Mg(2+) binding. A linker region spans residues 236-256; it reads WELSFAESVIKMRILENLARS. Residues 257-461 are N-acetyltransferase; sequence GVTIHSPESV…LEDKSKVKDE (205 aa). Residues R339 and K357 each contribute to the UDP-N-acetyl-alpha-D-glucosamine site. The Proton acceptor role is filled by H369. UDP-N-acetyl-alpha-D-glucosamine-binding residues include Y372 and N383. Acetyl-CoA is bound by residues A386, S411, G429, and R446.

The protein in the N-terminal section; belongs to the N-acetylglucosamine-1-phosphate uridyltransferase family. In the C-terminal section; belongs to the transferase hexapeptide repeat family. In terms of assembly, homotrimer. Requires Mg(2+) as cofactor.

The protein localises to the cytoplasm. The catalysed reaction is alpha-D-glucosamine 1-phosphate + acetyl-CoA = N-acetyl-alpha-D-glucosamine 1-phosphate + CoA + H(+). It carries out the reaction N-acetyl-alpha-D-glucosamine 1-phosphate + UTP + H(+) = UDP-N-acetyl-alpha-D-glucosamine + diphosphate. Its pathway is nucleotide-sugar biosynthesis; UDP-N-acetyl-alpha-D-glucosamine biosynthesis; N-acetyl-alpha-D-glucosamine 1-phosphate from alpha-D-glucosamine 6-phosphate (route II): step 2/2. It functions in the pathway nucleotide-sugar biosynthesis; UDP-N-acetyl-alpha-D-glucosamine biosynthesis; UDP-N-acetyl-alpha-D-glucosamine from N-acetyl-alpha-D-glucosamine 1-phosphate: step 1/1. The protein operates within bacterial outer membrane biogenesis; LPS lipid A biosynthesis. Functionally, catalyzes the last two sequential reactions in the de novo biosynthetic pathway for UDP-N-acetylglucosamine (UDP-GlcNAc). The C-terminal domain catalyzes the transfer of acetyl group from acetyl coenzyme A to glucosamine-1-phosphate (GlcN-1-P) to produce N-acetylglucosamine-1-phosphate (GlcNAc-1-P), which is converted into UDP-GlcNAc by the transfer of uridine 5-monophosphate (from uridine 5-triphosphate), a reaction catalyzed by the N-terminal domain. This is Bifunctional protein GlmU from Hydrogenobaculum sp. (strain Y04AAS1).